The chain runs to 226 residues: Large ribosomal subunit protein uL1 (226 aa).

Belongs to the universal ribosomal protein uL1 family. Part of the 50S ribosomal subunit.

Binds directly to 23S rRNA. Probably involved in E site tRNA release. Its function is as follows. Protein L1 is also a translational repressor protein, it controls the translation of its operon by binding to its mRNA. In Korarchaeum cryptofilum (strain OPF8), this protein is Large ribosomal subunit protein uL1.